The following is a 198-amino-acid chain: Single-stranded DNA cytosine deaminase (198 aa).

A Bipartite nuclear localization signal motif is present at residues 1 to 30 (MDSLLMKQKKFLYHFKNVRWAKGRHETYLC). The segment at 2-26 (DSLLMKQKKFLYHFKNVRWAKGRHE) is interaction with SUPT6H. Positions 23-129 (GRHETYLCYV…KAEPEGLRRL (107 aa)) constitute a CMP/dCMP-type deaminase domain. T27 is modified (phosphothreonine; by PKA). Phosphoserine; by PKA is present on S38. Residues 39-42 (ATSC) are important for interaction with CTNNBL1. H56 contributes to the Zn(2+) binding site. The active-site Proton donor is the E58. The Zn(2+) site is built by C87 and C90. Positions 88-116 (YDCARHVAEFLRWNPNLSLRIFTARLYFC) are required for interaction with RNF126. The Nuclear export signal motif lies at 183-198 (LYEVDDLRDAFRMLGF).

The protein belongs to the cytidine and deoxycytidylate deaminase family. As to quaternary structure, interacts with CTNNBL1; the interaction is important for the immunoglobulin switch activity of AICDA. Interacts (via its NLS) with KPNA1. Interacts with PKA/PRKACA and PRKAR1A/PKR1. Interacts with SUPT6H, TRIM28 and NCL. Directly interacts with MCM3AP/GANP; this interaction may favor AICDA recruitment to immunoglobulin variable region genes, hence promoting somatic hypermutations. Zn(2+) is required as a cofactor. Post-translationally, ser-38 is the major site whereas Thr-27 is the minor site of phosphorylation. Phosphorylation regulates its class-switch recombination activity. Probably monoubiquitinated on several residues by RNF126. In terms of tissue distribution, expressed in germinal center B-cells (at protein level).

It is found in the nucleus. The protein localises to the cytoplasm. The catalysed reaction is a 2'-deoxycytidine in single-stranded DNA + H2O + H(+) = a 2'-deoxyuridine in single-stranded DNA + NH4(+). Functionally, single-stranded DNA-specific cytidine deaminase. Involved in somatic hypermutation (SHM), gene conversion, and class-switch recombination (CSR) in B-lymphocytes by deaminating C to U during transcription of Ig-variable (V) and Ig-switch (S) region DNA. Required for several crucial steps of B-cell terminal differentiation necessary for efficient antibody responses. May also play a role in the epigenetic regulation of gene expression by participating in DNA demethylation. This chain is Single-stranded DNA cytosine deaminase (Aicda), found in Mus musculus (Mouse).